The primary structure comprises 1188 residues: AT-rich interactive domain-containing protein 5B (1188 aa).

Lys130 participates in a covalent cross-link: Glycyl lysine isopeptide (Lys-Gly) (interchain with G-Cter in SUMO2). The interval 251-277 (RPRKKKPCPQRRDSFSGVKDSNNNSDG) is disordered. At Ser264 the chain carries Phosphoserine. Positions 318–410 (RADEQAFLVA…LILPYERFIK (93 aa)) constitute an ARID domain. N6,N6-dimethyllysine is present on Lys336. Residues 412–611 (EEDKPLPPIK…QPPLANQNET (200 aa)) form a disordered region. Lys445 is covalently cross-linked (Glycyl lysine isopeptide (Lys-Gly) (interchain with G-Cter in SUMO2)). Positions 446–458 (HEIPKSKKEKENA) are enriched in basic and acidic residues. Residues Lys494 and Lys496 each participate in a glycyl lysine isopeptide (Lys-Gly) (interchain with G-Cter in SUMO2) cross-link. A compositionally biased stretch (polar residues) spans 597-609 (SFPTTQPPLANQN). Glycyl lysine isopeptide (Lys-Gly) (interchain with G-Cter in SUMO2) cross-links involve residues Lys767, Lys774, Lys803, and Lys810. Disordered regions lie at residues 846–874 (HHLH…PSHR) and 891–918 (DKKS…HKPT). Residues 847–866 (HLHNEQTSKYPSRDMYRESE) show a composition bias toward basic and acidic residues. Residues Lys893, Lys916, Lys920, and Lys935 each participate in a glycyl lysine isopeptide (Lys-Gly) (interchain with G-Cter in SUMO2) cross-link. The disordered stretch occupies residues 956 to 978 (RVSPMTMSGPKKYPESLSRSGKP). Glycyl lysine isopeptide (Lys-Gly) (interchain with G-Cter in SUMO2) cross-links involve residues Lys988, Lys1000, and Lys1013. Residues 1028–1070 (ARAVSPLDPSKEVSGKEKASEQESEGSKAAHGGHSGGGSEGHK) are disordered. Ser1032 bears the Phosphoserine mark. The segment covering 1036 to 1055 (PSKEVSGKEKASEQESEGSK) has biased composition (basic and acidic residues). Residues Lys1055 and Lys1070 each participate in a glycyl lysine isopeptide (Lys-Gly) (interchain with G-Cter in SUMO2) cross-link. At Ser1133 the chain carries Phosphoserine.

This sequence belongs to the ARID5B family. Post-translationally, methylation at Lys-336 prevents DNA-binding. Demethylation by PHF2 promotes recruitment of the PHF2-ARID5B complex to promoters. Widely expressed, including in liver (at protein level).

The protein resides in the nucleus. In terms of biological role, transcription coactivator that binds to the 5'-AATA[CT]-3' core sequence and plays a key role in adipogenesis and liver development. Acts by forming a complex with phosphorylated PHF2, which mediates demethylation at Lys-336, leading to target the PHF2-ARID5B complex to target promoters, where PHF2 mediates demethylation of dimethylated 'Lys-9' of histone H3 (H3K9me2), followed by transcription activation of target genes. The PHF2-ARID5B complex acts as a coactivator of HNF4A in liver. Required for adipogenesis: regulates triglyceride metabolism in adipocytes by regulating expression of adipogenic genes. Overexpression leads to induction of smooth muscle marker genes, suggesting that it may also act as a regulator of smooth muscle cell differentiation and proliferation. Represses the cytomegalovirus enhancer. The sequence is that of AT-rich interactive domain-containing protein 5B (ARID5B) from Homo sapiens (Human).